The following is a 130-amino-acid chain: MATTSKKTGSKKSKRNVPNGVVHIQSTFNNTIVSITDTSGEVISWSSAGASGFKGARKGTPFAAQTAAELAARRALEQGMRQIEVLVRGPGSGRETAIRALQVAGLEITLIRDVTPLPHNGCRRPKRRRV.

Belongs to the universal ribosomal protein uS11 family. In terms of assembly, part of the 30S ribosomal subunit. Interacts with proteins S7 and S18. Binds to IF-3.

Its function is as follows. Located on the platform of the 30S subunit, it bridges several disparate RNA helices of the 16S rRNA. Forms part of the Shine-Dalgarno cleft in the 70S ribosome. The protein is Small ribosomal subunit protein uS11 of Prochlorococcus marinus (strain NATL1A).